A 413-amino-acid chain; its full sequence is Transcription factor E2F4 (413 aa).

The tract at residues 1-20 is disordered; sequence MAEAGPQAPPPPGTPSRHEK. N-acetylalanine is present on Ala2. The DNA-binding element occupies 16 to 85; sequence SRHEKSLGLL…KNSIQWKGVG (70 aa). The segment at 43-65 is leucine-zipper; sequence LKLAADTLAVRQKRRIYDITNVL. A DEF box motif is present at residues 48–85; sequence DTLAVRQKRRIYDITNVLEGIGLIEKKSKNSIQWKGVG. A dimerization region spans residues 86–181; sequence PGCNTREIAD…GLNGQKKYQI (96 aa). The segment at 211–340 is disordered; that stretch reads PPEDLLQSPS…PSTSFEPIKA (130 aa). 2 stretches are compositionally biased toward polar residues: residues 234 to 249 and 293 to 306; these read AQSQEASRPNSPQLTP and TLDTRPLQSSALLD. The span at 307 to 327 shows a compositional bias: low complexity; it reads SSSSSSSSSSSSSNSNSSSSS. A transactivation region spans residues 337–413; sequence PIKADPTGVL…DLFDVPVLNL (77 aa). Ser384 is subject to Phosphoserine. The HCFC1-binding-motif (HBM) motif lies at 389–392; the sequence is DHDY. Residues 390 to 407 form an interaction with RBL1 and RBL2 region; sequence HDYIYNLDESEGVCDLFD.

This sequence belongs to the E2F/DP family. Component of the DRTF1/E2F transcription factor complex. Binds cooperatively with TFDP1/Dp-1 to E2F sites. The E2F4/TFDP1 dimer interacts preferentially with pocket protein RBL1, which inhibits the E2F transactivation domain. Lower affinity interaction has been found with retinoblastoma protein RB1. Interacts with TRRAP, which probably mediates its interaction with histone acetyltransferase complexes, leading to transcription activation. Interacts with HCFC1. Component of the DREAM complex (also named LINC complex) at least composed of E2F4, E2F5, LIN9, LIN37, LIN52, LIN54, MYBL1, MYBL2, RBL1, RBL2, RBBP4, TFDP1 and TFDP2. The complex exists in quiescent cells where it represses cell cycle-dependent genes. It dissociates in S phase when LIN9, LIN37, LIN52 and LIN54 form a subcomplex that binds to MYBL2. Interacts with PML (isoform PML-1, isoform PML-2, isoform PML-3, isoform PML-4 and isoform PML-5). Interacts with CEBPA (when phosphorylated). Post-translationally, differentially phosphorylated in vivo. As to expression, found in all tissue examined including heart, brain, placenta, lung, liver, skeletal muscle, kidney and pancreas.

The protein resides in the nucleus. Functionally, transcription activator that binds DNA cooperatively with DP proteins through the E2 recognition site, 5'-TTTC[CG]CGC-3' found in the promoter region of a number of genes whose products are involved in cell cycle regulation or in DNA replication. The DRTF1/E2F complex functions in the control of cell-cycle progression from G1 to S phase. E2F4 binds with high affinity to RBL1 and RBL2. In some instances can also bind RB1. Specifically required for multiciliate cell differentiation: together with MCIDAS and E2F5, binds and activate genes required for centriole biogenesis. The protein is Transcription factor E2F4 (E2F4) of Homo sapiens (Human).